Reading from the N-terminus, the 447-residue chain is 3-phosphoshikimate 1-carboxyvinyltransferase 2 (447 aa).

3-phosphoshikimate contacts are provided by Lys40, Ser41, and Arg45. Lys40 provides a ligand contact to phosphoenolpyruvate. Phosphoenolpyruvate-binding residues include Gly109 and Arg138. 3-phosphoshikimate contacts are provided by Ser184, Ser185, Gln186, Asp329, and His356. Position 186 (Gln186) interacts with phosphoenolpyruvate. The active-site Proton acceptor is the Asp329. 3 residues coordinate phosphoenolpyruvate: Arg360, Arg403, and Lys428.

The protein belongs to the EPSP synthase family. As to quaternary structure, monomer.

The protein resides in the cytoplasm. It carries out the reaction 3-phosphoshikimate + phosphoenolpyruvate = 5-O-(1-carboxyvinyl)-3-phosphoshikimate + phosphate. Its pathway is metabolic intermediate biosynthesis; chorismate biosynthesis; chorismate from D-erythrose 4-phosphate and phosphoenolpyruvate: step 6/7. In terms of biological role, catalyzes the transfer of the enolpyruvyl moiety of phosphoenolpyruvate (PEP) to the 5-hydroxyl of shikimate-3-phosphate (S3P) to produce enolpyruvyl shikimate-3-phosphate and inorganic phosphate. This Halalkalibacterium halodurans (strain ATCC BAA-125 / DSM 18197 / FERM 7344 / JCM 9153 / C-125) (Bacillus halodurans) protein is 3-phosphoshikimate 1-carboxyvinyltransferase 2.